A 92-amino-acid chain; its full sequence is Probable acyl carrier protein (92 aa).

One can recognise a Carrier domain in the interval 11–92; the sequence is QVTFEELSAL…QVNATLRTAV (82 aa). The residue at position 49 (S49) is an O-(pantetheine 4'-phosphoryl)serine.

Post-translationally, 4'-phosphopantetheine is transferred from CoA to a specific serine of the apo-ACP-like protein.

Functionally, involved in developmentally regulated synthesis of a compound biosynthetically related to polyketide antibiotics which is essential for spore color in Streptomyces halstedii. The sequence is that of Probable acyl carrier protein (sch3) from Streptomyces halstedii.